A 321-amino-acid polypeptide reads, in one-letter code: MSIKEWFEDKRKITALLKNSVERDSKDANETEKNKNKSIDYAKIKKLWAQCDNCENLLYLRFLRENQSVCKECGYYLQMNSSDRIELLIDRDTWRPMDEDMYTLDVLQFYSENEPSHSDNLNSEDESYKDHITFYQIETGLTDAIQTGIGQLNGLTIALGVMDFQFMGGSMGSVVGEKITRLIERATAESLPLIMVCASGGARMQEGSFSLMQMAKIASALYIHQKEKKLLYISILTSPTTGGVTASFGMLGDIIIAEPKAYIAFAGKRVIEQTLGQKVIEDFQVTEHLFGHGLFDLIVPRNLLKGVLSELFWFYVLRSSL.

One can recognise a CoA carboxyltransferase N-terminal domain in the interval 47–321 (LWAQCDNCEN…FWFYVLRSSL (275 aa)). Cys51, Cys54, Cys70, and Cys73 together coordinate Zn(2+). A C4-type zinc finger spans residues 51–73 (CDNCENLLYLRFLRENQSVCKEC).

The protein belongs to the AccD/PCCB family. As to quaternary structure, acetyl-CoA carboxylase is a heterohexamer composed of biotin carboxyl carrier protein, biotin carboxylase and 2 subunits each of ACCase subunit alpha and ACCase plastid-coded subunit beta (accD). Requires Zn(2+) as cofactor.

Its subcellular location is the plastid. It is found in the chloroplast stroma. It catalyses the reaction N(6)-carboxybiotinyl-L-lysyl-[protein] + acetyl-CoA = N(6)-biotinyl-L-lysyl-[protein] + malonyl-CoA. The protein operates within lipid metabolism; malonyl-CoA biosynthesis; malonyl-CoA from acetyl-CoA: step 1/1. In terms of biological role, component of the acetyl coenzyme A carboxylase (ACC) complex. Biotin carboxylase (BC) catalyzes the carboxylation of biotin on its carrier protein (BCCP) and then the CO(2) group is transferred by the transcarboxylase to acetyl-CoA to form malonyl-CoA. This Pinus thunbergii (Japanese black pine) protein is Acetyl-coenzyme A carboxylase carboxyl transferase subunit beta, chloroplastic.